The sequence spans 129 residues: Putative protein p14 (129 aa).

The sequence is that of Putative protein p14 (14) from Acyrthosiphon pisum secondary endosymbiont phage 1 (Bacteriophage APSE-1).